The sequence spans 130 residues: uncharacterized protein (130 aa).

Residues 1–26 (MINNFKGILIIILSFLFLLLFKYSNA) form the signal peptide. Asn-58 is a glycosylation site (N-linked (GlcNAc...) asparagine).

The protein belongs to the Dictyostelium gerABC family.

The protein resides in the secreted. This is an uncharacterized protein from Dictyostelium discoideum (Social amoeba).